The primary structure comprises 67 residues: Small ribosomal subunit protein eS17 (67 aa).

It belongs to the eukaryotic ribosomal protein eS17 family.

In Thermococcus sibiricus (strain DSM 12597 / MM 739), this protein is Small ribosomal subunit protein eS17.